We begin with the raw amino-acid sequence, 109 residues long: Spermidine export protein MdtI (109 aa).

The next 4 membrane-spanning stretches (helical) occupy residues 6–26 (FYHIAFLILAVILEIIANILL), 35–55 (VWLGILSLLSVLGAFSALAQA), 64–84 (AYALWGGFGIAATVAAGWILF), and 88–108 (LNYKGWIGLILLLAGMVMIKL).

This sequence belongs to the drug/metabolite transporter (DMT) superfamily. Small multidrug resistance (SMR) (TC 2.A.7.1) family. MdtI subfamily. In terms of assembly, forms a complex with MdtJ.

Its subcellular location is the cell inner membrane. Functionally, catalyzes the excretion of spermidine. This chain is Spermidine export protein MdtI, found in Yersinia enterocolitica serotype O:8 / biotype 1B (strain NCTC 13174 / 8081).